The following is a 217-amino-acid chain: Ribosomal RNA small subunit methyltransferase G (217 aa).

S-adenosyl-L-methionine-binding positions include Gly-78, Phe-83, 129–130 (AE), and Arg-146.

This sequence belongs to the methyltransferase superfamily. RNA methyltransferase RsmG family.

The protein resides in the cytoplasm. It carries out the reaction guanosine(527) in 16S rRNA + S-adenosyl-L-methionine = N(7)-methylguanosine(527) in 16S rRNA + S-adenosyl-L-homocysteine. In terms of biological role, specifically methylates the N7 position of guanine in position 527 of 16S rRNA. The sequence is that of Ribosomal RNA small subunit methyltransferase G from Geobacter sp. (strain M21).